Reading from the N-terminus, the 808-residue chain is Transducin beta-like protein 3 (808 aa).

Alanine 2 is subject to N-acetylalanine. WD repeat units lie at residues 64–105 (EDQE…RLWK), 107–146 (IHTAPVATMAFDPTSTLLATGGCDGAVRVWDIVRHYGTHH), 149–190 (GSPG…CLAV), 193–232 (AHYSAVTSLAFSADGHTMLSSGRDKICIIWDLQSCQATRT), 245–284 (LPEEPVSQLGVKSPGLYFLTAGDQGTLRVWEAASGQCVYT), 290–329 (GPGQELTHCTLAHTAGVVLTATADHNLLLYEARSLRLQKQ), 332–372 (GYSE…CQIL), 374–413 (GHTDIVLALDVFRKGWLFASCAKDQSVRIWRMNKAGQVMC), 419–459 (GHTH…LSKN), 477–516 (CHDKDINSVAIAPNDKLLATGSQDRTAKLWALPQCQLLGV), 519–560 (GHRR…KTFE), 562–602 (HDAS…RTLD), and 604–642 (HEDKVWGLHCSRLDDHALTGASDSRVILWKDVTEAEQAE). Position 257 is a phosphoserine (serine 257). A Glycyl lysine isopeptide (Lys-Gly) (interchain with G-Cter in SUMO2) cross-link involves residue lysine 407.

As to quaternary structure, part of the small subunit (SSU) processome, composed of more than 70 proteins and the RNA chaperone small nucleolar RNA (snoRNA) U3.

The protein resides in the nucleus. It is found in the nucleolus. Part of the small subunit (SSU) processome, first precursor of the small eukaryotic ribosomal subunit. During the assembly of the SSU processome in the nucleolus, many ribosome biogenesis factors, an RNA chaperone and ribosomal proteins associate with the nascent pre-rRNA and work in concert to generate RNA folding, modifications, rearrangements and cleavage as well as targeted degradation of pre-ribosomal RNA by the RNA exosome. This Homo sapiens (Human) protein is Transducin beta-like protein 3.